We begin with the raw amino-acid sequence, 244 residues long: Ribosomal RNA small subunit methyltransferase G (244 aa).

S-adenosyl-L-methionine-binding positions include G79, F84, 102–104 (DST), 130–131 (AE), and R149. The tract at residues 225–244 (DRYPRREGVPNQQPLFWSAK) is disordered. Residues 234-244 (PNQQPLFWSAK) show a composition bias toward polar residues.

It belongs to the methyltransferase superfamily. RNA methyltransferase RsmG family.

It localises to the cytoplasm. In terms of biological role, specifically methylates the N7 position of a guanine in 16S rRNA. This Deinococcus deserti (strain DSM 17065 / CIP 109153 / LMG 22923 / VCD115) protein is Ribosomal RNA small subunit methyltransferase G.